The primary structure comprises 1323 residues: Sister chromatid cohesion protein PDS5 homolog A-A (1323 aa).

Residues F385–Y421 form an HEAT repeat. A disordered region spans residues L1139–R1323. The segment covering S1153–S1165 has biased composition (low complexity). Polar residues-rich tracts occupy residues D1166–E1176 and L1210–T1220. Residues N1235–D1246 show a composition bias toward basic and acidic residues.

In terms of assembly, interacts with the cohesin complex. Binds chromatin in a cohesin-dependent manner.

The protein localises to the nucleus. Its function is as follows. May regulate sister chromatid cohesion during mitosis and couple it to DNA replication. The sequence is that of Sister chromatid cohesion protein PDS5 homolog A-A (pds5a-a) from Xenopus laevis (African clawed frog).